Here is a 394-residue protein sequence, read N- to C-terminus: 1-deoxy-D-xylulose 5-phosphate reductoisomerase (394 aa).

Thr10, Gly11, Ser12, Ile13, Gly38, Arg39, Asn40, and Asn123 together coordinate NADPH. A 1-deoxy-D-xylulose 5-phosphate-binding site is contributed by Lys124. Glu125 provides a ligand contact to NADPH. Asp149 serves as a coordination point for Mn(2+). Residues Ser150, Glu151, Ser175, and His198 each coordinate 1-deoxy-D-xylulose 5-phosphate. Glu151 contacts Mn(2+). Residue Gly204 participates in NADPH binding. Residues Ser211, Asn216, Lys217, and Glu220 each coordinate 1-deoxy-D-xylulose 5-phosphate. Mn(2+) is bound at residue Glu220.

It belongs to the DXR family. Mg(2+) is required as a cofactor. It depends on Mn(2+) as a cofactor.

The enzyme catalyses 2-C-methyl-D-erythritol 4-phosphate + NADP(+) = 1-deoxy-D-xylulose 5-phosphate + NADPH + H(+). The protein operates within isoprenoid biosynthesis; isopentenyl diphosphate biosynthesis via DXP pathway; isopentenyl diphosphate from 1-deoxy-D-xylulose 5-phosphate: step 1/6. Catalyzes the NADPH-dependent rearrangement and reduction of 1-deoxy-D-xylulose-5-phosphate (DXP) to 2-C-methyl-D-erythritol 4-phosphate (MEP). This Cereibacter sphaeroides (strain ATCC 17025 / ATH 2.4.3) (Rhodobacter sphaeroides) protein is 1-deoxy-D-xylulose 5-phosphate reductoisomerase.